Consider the following 80-residue polypeptide: Conotoxin SIVB (80 aa).

A signal peptide spans 1 to 21 (MGMRMMFTVFLSVVLATTVVS). The propeptide occupies 22–38 (TPSDRASDGRNAAVHER). Q39 is modified (pyrrolidone carboxylic acid). S45 is a glycosylation site (O-linked (HexNAc...) serine). A 4-hydroxyproline mark is found at P55, P60, P61, P69, P72, and P75. The residue at position 75 (P75) is a Proline amide. Residues 76–80 (GRRND) constitute a propeptide that is removed on maturation.

Belongs to the conotoxin A superfamily. Contains 3 disulfide bonds. In terms of processing, O-linked glycan consists of Hex3-HexNAc2 pentasaccharide. As to expression, expressed by the venom duct.

The protein localises to the secreted. Neurotoxin with probable activity on sodium channel. Induces intense repetitive firing of the frog neuromuscular junction, leading to a tetanic contracture in muscle fiber (spastic paralysis). In vivo, shows the same effect as the whole venom when injected on fish prey. The chain is Conotoxin SIVB from Conus striatus (Striated cone).